The primary structure comprises 333 residues: Adenosine deaminase (333 aa).

Residues His-12 and His-14 each contribute to the Zn(2+) site. Substrate-binding residues include His-14, Asp-16, and Gly-170. Residue His-197 participates in Zn(2+) binding. The active-site Proton donor is Glu-200. Asp-278 contacts Zn(2+). Residue Asp-279 coordinates substrate.

This sequence belongs to the metallo-dependent hydrolases superfamily. Adenosine and AMP deaminases family. Adenosine deaminase subfamily. Zn(2+) serves as cofactor.

It carries out the reaction adenosine + H2O + H(+) = inosine + NH4(+). The enzyme catalyses 2'-deoxyadenosine + H2O + H(+) = 2'-deoxyinosine + NH4(+). Functionally, catalyzes the hydrolytic deamination of adenosine and 2-deoxyadenosine. In Escherichia coli (strain SMS-3-5 / SECEC), this protein is Adenosine deaminase.